Reading from the N-terminus, the 253-residue chain is 2-dehydro-3-deoxy-D-gluconate 5-dehydrogenase (253 aa).

Position 14-38 (14-38 (LITGCDTGLGQGMAVGLAEAGCDIV)) interacts with NAD(+). Ser145 is a binding site for substrate. Residue Tyr158 is the Proton acceptor of the active site.

It belongs to the short-chain dehydrogenases/reductases (SDR) family.

The catalysed reaction is 2-dehydro-3-deoxy-D-gluconate + NAD(+) = 3-deoxy-D-glycero-2,5-hexodiulosonate + NADH + H(+). It functions in the pathway glycan metabolism; pectin degradation; 2-dehydro-3-deoxy-D-gluconate from pectin: step 5/5. Catalyzes the reduction of 2,5-diketo-3-deoxygluconate (DKII or 4,6-dihydroxy-2,5-dioxohexanoate) into 2-keto-3-deoxygluconate (KDG or 2-dehydro-3-deoxygluconate) with a concomitant oxidation of NADH. The chain is 2-dehydro-3-deoxy-D-gluconate 5-dehydrogenase (kduD) from Dickeya dadantii (strain 3937) (Erwinia chrysanthemi (strain 3937)).